A 472-amino-acid polypeptide reads, in one-letter code: Trigger factor (472 aa).

The 88-residue stretch at 174–261 (GDIALVSFKG…LEDLKIKELP (88 aa)) folds into the PPIase FKBP-type domain. The segment at 438-472 (EKTPEKARDQIKEKSSKKKTTKTNKEKKSSKTPKS) is disordered. Residues 439–451 (KTPEKARDQIKEK) show a composition bias toward basic and acidic residues.

It belongs to the FKBP-type PPIase family. Tig subfamily.

It localises to the cytoplasm. It carries out the reaction [protein]-peptidylproline (omega=180) = [protein]-peptidylproline (omega=0). Functionally, involved in protein export. Acts as a chaperone by maintaining the newly synthesized protein in an open conformation. Functions as a peptidyl-prolyl cis-trans isomerase. This is Trigger factor from Prochlorococcus marinus (strain NATL2A).